The following is a 446-amino-acid chain: Glutamine synthetase (446 aa).

The GS beta-grasp domain occupies 18-103 (ENVRYLRLQF…LICDVYKTDG (86 aa)). In terms of domain architecture, GS catalytic spans 110–446 (PRANLKRVLK…WERDQYMKQY (337 aa)). Residues Glu134 and Glu136 each coordinate Mg(2+). Glu186 provides a ligand contact to ATP. Residues Glu191 and Glu198 each coordinate Mg(2+). Residues 242 to 243 (NG) and Gly243 contribute to the L-glutamate site. Position 247 (His247) interacts with Mg(2+). Residue Ser251 participates in ATP binding. L-glutamate contacts are provided by Arg300, Glu306, and Arg318. ATP-binding residues include Arg318 and Arg323. Glu335 is a Mg(2+) binding site. Residue Arg337 coordinates L-glutamate.

It belongs to the glutamine synthetase family. As to quaternary structure, oligomer of 12 subunits arranged in the form of two hexagons. In its feedback-inhibited form, interacts with TnrA in order to block its DNA-binding activity. The cofactor is Mg(2+).

It localises to the cytoplasm. It carries out the reaction L-glutamate + NH4(+) + ATP = L-glutamine + ADP + phosphate + H(+). Its activity is regulated as follows. Inhibited by glutamine. Glutamine synthetase (GS) is an unusual multitasking protein that functions as an enzyme, a transcription coregulator, and a chaperone in ammonium assimilation and in the regulation of genes involved in nitrogen metabolism. It catalyzes the ATP-dependent biosynthesis of glutamine from glutamate and ammonia. Feedback-inhibited GlnA also interacts with and regulates the activity of the transcriptional regulator TnrA. During nitrogen limitation, TnrA is in its DNA-binding active state and turns on the transcription of genes required for nitrogen assimilation. Under conditions of nitrogen excess, feedback-inhibited GlnA forms a stable complex with TnrA, which inhibits its DNA-binding activity. In contrast, feedback-inhibited GlnA acts as a chaperone to stabilize the DNA-binding activity of GlnR, which represses the transcription of nitrogen assimilation genes. The protein is Glutamine synthetase of Staphylococcus aureus (strain MSSA476).